Consider the following 309-residue polypeptide: Protein FdhE (309 aa).

The protein belongs to the FdhE family.

Its subcellular location is the cytoplasm. Functionally, necessary for formate dehydrogenase activity. The protein is Protein FdhE of Escherichia coli O45:K1 (strain S88 / ExPEC).